Here is a 395-residue protein sequence, read N- to C-terminus: 1-deoxy-D-xylulose 5-phosphate reductoisomerase (395 aa).

NADPH-binding residues include Thr13, Gly14, Ser15, Ile16, Lys40, and Asn127. A 1-deoxy-D-xylulose 5-phosphate-binding site is contributed by Lys128. Glu129 serves as a coordination point for NADPH. Asp153 contacts Mn(2+). 4 residues coordinate 1-deoxy-D-xylulose 5-phosphate: Ser154, Glu155, Ser184, and His207. Glu155 provides a ligand contact to Mn(2+). Residue Gly213 coordinates NADPH. The 1-deoxy-D-xylulose 5-phosphate site is built by Ser220, Asn225, Lys226, and Glu229. Position 229 (Glu229) interacts with Mn(2+).

The protein belongs to the DXR family. Requires Mg(2+) as cofactor. Mn(2+) is required as a cofactor.

It carries out the reaction 2-C-methyl-D-erythritol 4-phosphate + NADP(+) = 1-deoxy-D-xylulose 5-phosphate + NADPH + H(+). Its pathway is isoprenoid biosynthesis; isopentenyl diphosphate biosynthesis via DXP pathway; isopentenyl diphosphate from 1-deoxy-D-xylulose 5-phosphate: step 1/6. Functionally, catalyzes the NADPH-dependent rearrangement and reduction of 1-deoxy-D-xylulose-5-phosphate (DXP) to 2-C-methyl-D-erythritol 4-phosphate (MEP). The protein is 1-deoxy-D-xylulose 5-phosphate reductoisomerase of Nitrosospira multiformis (strain ATCC 25196 / NCIMB 11849 / C 71).